The primary structure comprises 350 residues: Biotin synthase (350 aa).

In terms of domain architecture, Radical SAM core spans 41–268 (NEVQISRLLS…LSRVRLSAGR (228 aa)). [4Fe-4S] cluster-binding residues include cysteine 56, cysteine 60, and cysteine 63. [2Fe-2S] cluster-binding residues include cysteine 100, cysteine 131, cysteine 191, and arginine 263.

Belongs to the radical SAM superfamily. Biotin synthase family. In terms of assembly, homodimer. The cofactor is [4Fe-4S] cluster. [2Fe-2S] cluster serves as cofactor.

It catalyses the reaction (4R,5S)-dethiobiotin + (sulfur carrier)-SH + 2 reduced [2Fe-2S]-[ferredoxin] + 2 S-adenosyl-L-methionine = (sulfur carrier)-H + biotin + 2 5'-deoxyadenosine + 2 L-methionine + 2 oxidized [2Fe-2S]-[ferredoxin]. Its pathway is cofactor biosynthesis; biotin biosynthesis; biotin from 7,8-diaminononanoate: step 2/2. Functionally, catalyzes the conversion of dethiobiotin (DTB) to biotin by the insertion of a sulfur atom into dethiobiotin via a radical-based mechanism. This is Biotin synthase from Shewanella baltica (strain OS223).